Reading from the N-terminus, the 437-residue chain is Eukaryotic peptide chain release factor subunit 1 (437 aa).

The residue at position 182 (Gln-182) is an N5-methylglutamine. A Glycyl lysine isopeptide (Lys-Gly) (interchain with G-Cter in ubiquitin) cross-link involves residue Lys-331. At Ser-421 the chain carries Phosphoserine.

Belongs to the eukaryotic release factor 1 family. Component of the eRF1-eRF3-GTP ternary complex, composed of SUP45/eRF1, SUP35/eRF3 and GTP. Interacts with TPA1. N5-methylated on Gln-182 by MTQ2.

It is found in the cytoplasm. Component of the eRF1-eRF3-GTP ternary complex, a ternary complex that mediates translation termination in response to the termination codons. The eRF1-eRF3-GTP complex binds to a stop codon in the ribosomal A-site. SUP45/eRF1 is responsible for stop codon recognition and inducing hydrolysis of peptidyl-tRNA. Following GTP hydrolysis by SUP35/eRF3, SUP35/eRF3 dissociates, permitting SUP45/eRF1 to accommodate fully in the A-site and mediate hydrolysis of peptidyl-tRNA. The chain is Eukaryotic peptide chain release factor subunit 1 (SUP45) from Saccharomyces cerevisiae (strain ATCC 204508 / S288c) (Baker's yeast).